Here is a 228-residue protein sequence, read N- to C-terminus: Ribose-5-phosphate isomerase A (228 aa).

Substrate is bound by residues threonine 27–threonine 30, aspartate 86–aspartate 89, and lysine 100–glycine 103. The Proton acceptor role is filled by glutamate 109. A substrate-binding site is contributed by lysine 127.

It belongs to the ribose 5-phosphate isomerase family. In terms of assembly, homodimer.

The catalysed reaction is aldehydo-D-ribose 5-phosphate = D-ribulose 5-phosphate. The protein operates within carbohydrate degradation; pentose phosphate pathway; D-ribose 5-phosphate from D-ribulose 5-phosphate (non-oxidative stage): step 1/1. Its function is as follows. Catalyzes the reversible conversion of ribose-5-phosphate to ribulose 5-phosphate. The sequence is that of Ribose-5-phosphate isomerase A from Borreliella burgdorferi (strain ZS7) (Borrelia burgdorferi).